Here is a 287-residue protein sequence, read N- to C-terminus: uncharacterized protein (287 aa).

Transmembrane regions (helical) follow at residues 27 to 47 (LTFS…FGVQ), 66 to 86 (LGTI…VTAF), 97 to 117 (WFWG…GVLL), 135 to 155 (IVFA…LSAL), 171 to 191 (IFIW…VLNF), 205 to 225 (LFPG…VYFV), and 254 to 274 (SALF…YFIL).

The protein resides in the cell membrane. This is an uncharacterized protein from Mycoplasma pneumoniae (strain ATCC 29342 / M129 / Subtype 1) (Mycoplasmoides pneumoniae).